Consider the following 214-residue polypeptide: MGLSHSHSVETRQLVEKTGFSAEQIEHLHKRFNSLSGDLLTIRKGHLNGISDLEVNPIRSKIVDAFFDKRNLRKGSSGYVEEINFEEFLTIMSYFRPLSQNMDEENISVCRKDKLRFLFNMYDTDNDSKITLEEYRKVVEELLSGNPNIEKETARSIADGAMLEAASICVGQMEPDQVYEGITFDDFLKIWEGIDIETKMHIRFLNMESIPSCR.

The N-myristoyl glycine moiety is linked to residue G2. Residues 110–145 (CRKDKLRFLFNMYDTDNDSKITLEEYRKVVEELLSG) enclose the EF-hand domain. Residues D123, D125, D127, K129, and E134 each coordinate Ca(2+).

The protein belongs to the calcineurin regulatory subunit family. CHP subfamily. Monomer. Homodimer.

The protein resides in the nucleus. The protein localises to the cytoplasm. Its subcellular location is the membrane. It is found in the cell membrane. It localises to the cell projection. The protein resides in the lamellipodium. The protein localises to the ruffle membrane. In terms of biological role, functions as an integral cofactor in cell pH regulation by controlling plasma membrane-type Na(+)/H(+) exchange activity. Promotes the induction of hematopoietic stem cell differentiation toward megakaryocytic lineage. Essential for the coupling of ERK cascade activation with the expression of ETS family genes in megakaryocytic differentiation. Also involved in granulocytic differentiation in a ERK-dependent manner. Inhibits the phosphatase activity of calcineurin. In Xenopus tropicalis (Western clawed frog), this protein is Calcineurin B homologous protein 3 (tesc).